The chain runs to 567 residues: MSASTGGGGDSGGSGGSSSSSQASCGPESSGSELALATPVPQMLQGLLGSDDEEQEDPKDYCKGGYHPVKIGDVFNGRYHVVRKLGWGHFSTVWLCWDIQRKRFVALKVVKSAGHYTETAVDEIKLLKCVRDSDPSDPKRETIVQLIDDFRISGVNGVHVCMVLEVLGHQLLKWIIKSNYQGLPVPCVKSIVRQVLHGLDYLHTKCKIIHTDIKPENILLCVGDAYIRRLAAEATEWQQAGAPPPSRSIVSTAPQEVLQTGKLSKNKRKKMRRKRKQQKRLLEERLRDLQRLEAMEAATQAEDSGLRLDGGSGSTSSSGCHPGGARAGPSPASSSPAPGGGRSLSAGSQTSGFSGSLFSPASCSILSGSSNQRETGGLLSPSTPFGASNLLVNPLEPQNADKIKIKIADLGNACWVHKHFTEDIQTRQYRAVEVLIGAEYGPPADIWSTACMAFELATGDYLFEPHSGEDYSRDEDHIAHIVELLGDIPPAFALSGRYSREFFNRRGELRHIHNLKHWGLYEVLMEKYEWPLEQATQFSAFLLPMMEYIPEKRASAADCLQHPWLNP.

Residues 1–16 are compositionally biased toward gly residues; the sequence is MSASTGGGGDSGGSGG. Residues 1-36 form a disordered region; the sequence is MSASTGGGGDSGGSGGSSSSSQASCGPESSGSELAL. Positions 17 to 32 are enriched in low complexity; sequence SSSSSQASCGPESSGS. Phosphoserine is present on S50. The region spanning 79–565 is the Protein kinase domain; it reads YHVVRKLGWG…AADCLQHPWL (487 aa). ATP-binding positions include 85-93 and K108; that span reads LGWGHFSTV. D212 acts as the Proton acceptor in catalysis. 2 disordered regions span residues 238 to 283 and 298 to 351; these read QQAG…RLLE and ATQA…SQTS. Positions 248 to 258 are enriched in polar residues; it reads SIVSTAPQEVL. Over residues 264-279 the composition is skewed to basic residues; sequence SKNKRKKMRRKRKQQK. The segment covering 327–348 has biased composition (low complexity); that stretch reads AGPSPASSSPAPGGGRSLSAGS. At S330 the chain carries Phosphoserine.

This sequence belongs to the protein kinase superfamily. CMGC Ser/Thr protein kinase family. Expressed in skeletal and heart muscle. Also expressed in the fetal brain.

It is found in the nucleus. The protein resides in the cytoplasm. The enzyme catalyses L-seryl-[protein] + ATP = O-phospho-L-seryl-[protein] + ADP + H(+). It catalyses the reaction L-threonyl-[protein] + ATP = O-phospho-L-threonyl-[protein] + ADP + H(+). In terms of biological role, serine/arginine-rich protein-specific kinase which specifically phosphorylates its substrates at serine residues located in regions rich in arginine/serine dipeptides, known as RS domains. Phosphorylates the SR splicing factor SRSF1 and the lamin-B receptor (LBR) in vitro. Required for normal muscle development. The chain is SRSF protein kinase 3 (SRPK3) from Homo sapiens (Human).